A 3434-amino-acid polypeptide reads, in one-letter code: Genome polyprotein (3434 aa).

The interval 2–15 (SKKPGGPGKPRVVN) is interaction with host EXOC1. Topologically, residues 2-110 (SKKPGGPGKP…KQKKRGGSET (109 aa)) are cytoplasmic. The tract at residues 37–72 (LLDGRGPIRFVLALLAFFRFTALAPTKALMRRWKSV) is hydrophobic; homodimerization of capsid protein C. Residues 106-125 (GGSETSVLMLIFMLIGFAAA) constitute a propeptide, ER anchor for the capsid protein C, removed in mature form by serine protease NS3. A helical membrane pass occupies residues 111–131 (SVLMLIFMLIGFAAALKLSTF). Residues 132 to 251 (QGKIMMTVNA…ATRYLTKTEN (120 aa)) lie on the Extracellular side of the membrane. N-linked (GlcNAc...) asparagine; by host glycosylation is present at asparagine 140. A helical membrane pass occupies residues 252–272 (WIIRNPGYALVAVVLGWMLGS). Residues 273 to 277 (NTGQK) are Cytoplasmic-facing. A helical membrane pass occupies residues 278-292 (VIFTVLLLLVAPAYS). At 293–745 (FNCLGMSSRD…QVFGGAFRTL (453 aa)) the chain is on the extracellular side. Cystine bridges form between cysteine 295–cysteine 322, cysteine 352–cysteine 408, cysteine 352–cysteine 413, cysteine 366–cysteine 397, cysteine 384–cysteine 408, and cysteine 384–cysteine 413. Residues 390 to 403 (DRGWGNGCGLFGKG) form a fusion peptide region. A glycan (N-linked (GlcNAc...) asparagine; by host) is linked at asparagine 446. Intrachain disulfides connect cysteine 482–cysteine 580 and cysteine 597–cysteine 628. The helical transmembrane segment at 746–766 (FGGMSWISPGLLGALLLWMGV) threads the bilayer. Residues 767–772 (NARDKS) are Cytoplasmic-facing. The helical transmembrane segment at 773-793 (IALAFLATGGVLLFLATNVHA) threads the bilayer. Residues 794 to 1218 (DTGCAIDITR…AFAESNNGGD (425 aa)) are Extracellular-facing. Intrachain disulfides connect cysteine 797/cysteine 808 and cysteine 848/cysteine 936. N-linked (GlcNAc...) asparagine; by host glycosylation is found at asparagine 923 and asparagine 968. Cystine bridges form between cysteine 972-cysteine 1016, cysteine 1073-cysteine 1122, cysteine 1084-cysteine 1105, and cysteine 1106-cysteine 1109. An N-linked (GlcNAc...) (high mannose) asparagine; by host glycan is attached at asparagine 1000. Residues 1219–1239 (VIHLALIAVFKVQPAFLVASL) form a helical membrane-spanning segment. The Cytoplasmic segment spans residues 1240–1249 (TRSRWTNQEN). Residues 1250–1270 (LVLVLGAAFFQMAASDLELTI) traverse the membrane as a helical segment. The Lumenal segment spans residues 1271 to 1286 (PGLLNSAATAWMVLRA). Residues 1287-1307 (MAFPSTSAIAMPMLAMLAPGM) form a helical membrane-spanning segment. A topological domain (cytoplasmic) is located at residue arginine 1308. A helical transmembrane segment spans residues 1309–1329 (MLHLDTYRIVLLLIGICSLLN). Residues 1330 to 1340 (ERRRSVEKKKG) lie on the Lumenal side of the membrane. The helical transmembrane segment at 1341–1361 (AVLIGLALTSTGYFSPTIMAA) threads the bilayer. Topologically, residues 1362 to 1373 (GLMICNPNKKRG) are cytoplasmic. A helical transmembrane segment spans residues 1374–1394 (WPATEVLTAVGLMFAIVGGLA). The Lumenal segment spans residues 1395–1397 (ELD). A helical transmembrane segment spans residues 1398–1418 (IDSMSVPFTIAGLMLVSYVIS). The Cytoplasmic portion of the chain corresponds to 1419-1475 (GKATDMWLERAADVSWEAGAAITGTSERLDVQLDDDGDFHLLNDPGVPWKIWVLRMT). An interacts with and activates NS3 protease region spans residues 1426 to 1465 (LERAADVSWEAGAAITGTSERLDVQLDDDGDFHLLNDPGV). The helical intramembrane region spans 1476-1496 (CLSVAAITPRAILPSAFGYWL). The Cytoplasmic segment spans residues 1497-2172 (TLKYTKRGGV…RMALEELPDA (676 aa)). One can recognise a Peptidase S7 domain in the interval 1504–1681 (GGVFWDTPSP…ERVEEPVPEA (178 aa)). Residues histidine 1554, aspartate 1578, and serine 1638 each act as charge relay system; for serine protease NS3 activity in the active site. The 157-residue stretch at 1684 to 1840 (PEMLKKRQLT…DTNSPVHDVS (157 aa)) folds into the Helicase ATP-binding domain. Residues 1688–1691 (KKRQ) form an important for RNA-binding region. 1697 to 1704 (LHPGAGKT) contributes to the ATP binding site. The DEAH box signature appears at 1788–1791 (DEAH). Positions 1851–2016 (GFEWITDYAG…GLVAQLYGPE (166 aa)) constitute a Helicase C-terminal domain. Lysine 1892 carries the post-translational modification N6-acetyllysine; by host. The interval 1958–1979 (AAQRRGRVGRNPSQIGDEYHYG) is disordered. Positions 2167-2171 (EELPD) are regulates the ATPase activity of NS3 helicase. A helical membrane pass occupies residues 2173–2193 (LETITLIAALGVMTAGFFLLM). Topologically, residues 2194-2197 (MQRK) are lumenal. Positions 2198–2218 (GIGKLGLGALVLVVATFFLWM) form an intramembrane region, helical. The Lumenal portion of the chain corresponds to 2219-2220 (SD). A helical membrane pass occupies residues 2221-2241 (VSGTKIAGVLLLALLMMVVLI). At 2242–2256 (PEPEKQRSQTDNQLA) the chain is on the cytoplasmic side. Residues 2257-2271 (VFLICVLLVVGLVAA) traverse the membrane as a helical segment. Residues 2272 to 2309 (NEYGMLERTKTDIRNLFGKSLIEENEVHIPPFDFFTLD) are Lumenal-facing. An intramembrane region (helical) is located at residues 2310–2330 (LKPATAWALYGGSTVVLTPLI). Residues 2331–2366 (KHLVTSQYVTTSLASINAQAGSLFTLPKGIPFTDFD) lie on the Lumenal side of the membrane. A helical membrane pass occupies residues 2367 to 2394 (LSVALVFLGCWGQVTLTTLIMATILVTL). The Cytoplasmic segment spans residues 2395 to 2446 (HYGYLLPGWQAEALRAAQKRTAAGIMKNAVVDGIVATDVPELERTTPQMQKR). The chain crosses the membrane as a helical span at residues 2447–2467 (LGQILLVLASVAAVCVNPRIT). The Lumenal segment spans residues 2468 to 2498 (TIREAGILCTAAALTLWDNNASAAWNSTTAT). The chain crosses the membrane as a helical span at residues 2499–2519 (GLCHVMRGSWIAGASIAWTLI). Residues 2520–3434 (KNAEKPAFKR…ETHVSEDRVL (915 aa)) lie on the Cytoplasmic side of the membrane. Residues 2530–2795 (GRAGGRTLGE…DVNLGSGTRA (266 aa)) form the mRNA cap 0-1 NS5-type MT domain. Position 2585 (serine 2585) interacts with S-adenosyl-L-methionine. At serine 2585 the chain carries Phosphoserine. Lysine 2590 serves as the catalytic For 2'-O-MTase activity. Residues glycine 2615, tryptophan 2616, threonine 2633, lysine 2634, aspartate 2660, and valine 2661 each coordinate S-adenosyl-L-methionine. Aspartate 2675 acts as the For 2'-O-MTase activity in catalysis. Isoleucine 2676 is an S-adenosyl-L-methionine binding site. Residues lysine 2711 and glutamate 2747 each act as for 2'-O-MTase activity in the active site. Tyrosine 2749 contacts S-adenosyl-L-methionine. Positions 2969, 2973, 2978, and 2981 each coordinate Zn(2+). A RdRp catalytic domain is found at 3059 to 3211 (GKIYADDTAG…KPLDDRFSTA (153 aa)). Histidine 3246, cysteine 3262, and cysteine 3381 together coordinate Zn(2+).

The protein in the N-terminal section; belongs to the class I-like SAM-binding methyltransferase superfamily. mRNA cap 0-1 NS5-type methyltransferase family. As to quaternary structure, homodimer. Interacts (via N-terminus) with host EXOC1 (via C-terminus); this interaction results in EXOC1 degradation through the proteasome degradation pathway. In terms of assembly, forms heterodimers with envelope protein E in the endoplasmic reticulum and Golgi. Homodimer; in the endoplasmic reticulum and Golgi. Interacts with protein prM. Interacts with non-structural protein 1. As to quaternary structure, homodimer; Homohexamer when secreted. Interacts with envelope protein E. NS1 interacts with NS4B. Interacts with host complement protein CFH; this interaction leads to the degradation of C3. In terms of assembly, interacts (via N-terminus) with serine protease NS3. Forms a heterodimer with serine protease NS3. May form homooligomers. As to quaternary structure, forms a heterodimer with NS2B. Interacts with non-structural protein 2A (via N-terminus). Interacts with NS4B. Interacts with unphosphorylated RNA-directed RNA polymerase NS5; this interaction stimulates RNA-directed RNA polymerase NS5 guanylyltransferase activity. In terms of assembly, interacts with serine protease NS3. Homodimer. Interacts with host STAT2; this interaction inhibits the phosphorylation of the latter, and, when all viral proteins are present (polyprotein), targets STAT2 for degradation. Interacts with serine protease NS3. Post-translationally, specific enzymatic cleavages in vivo yield mature proteins. Cleavages in the lumen of endoplasmic reticulum are performed by host signal peptidase, whereas cleavages in the cytoplasmic side are performed by serine protease NS3. Signal cleavage at the 2K-4B site requires a prior NS3 protease-mediated cleavage at the 4A-2K site. In terms of processing, cleaved in post-Golgi vesicles by a host furin, releasing the mature small envelope protein M, and peptide pr. This cleavage is incomplete as up to 30% of viral particles still carry uncleaved prM. N-glycosylated. Post-translationally, N-glycosylated. The excreted form is glycosylated and this is required for efficient secretion of the protein from infected cells. In terms of processing, acetylated by host KAT5. Acetylation modulates NS3 RNA-binding and unwinding activities and plays an important positive role for viral replication. Phosphorylated on serines residues. This phosphorylation may trigger NS5 nuclear localization.

The protein localises to the virion. Its subcellular location is the host nucleus. It is found in the host cytoplasm. It localises to the host perinuclear region. The protein resides in the secreted. The protein localises to the virion membrane. Its subcellular location is the host endoplasmic reticulum membrane. It catalyses the reaction Selective hydrolysis of -Xaa-Xaa-|-Yaa- bonds in which each of the Xaa can be either Arg or Lys and Yaa can be either Ser or Ala.. It carries out the reaction RNA(n) + a ribonucleoside 5'-triphosphate = RNA(n+1) + diphosphate. The catalysed reaction is a ribonucleoside 5'-triphosphate + H2O = a ribonucleoside 5'-diphosphate + phosphate + H(+). The enzyme catalyses ATP + H2O = ADP + phosphate + H(+). It catalyses the reaction a 5'-end (5'-triphosphoguanosine)-ribonucleoside in mRNA + S-adenosyl-L-methionine = a 5'-end (N(7)-methyl 5'-triphosphoguanosine)-ribonucleoside in mRNA + S-adenosyl-L-homocysteine. It carries out the reaction a 5'-end (N(7)-methyl 5'-triphosphoguanosine)-ribonucleoside in mRNA + S-adenosyl-L-methionine = a 5'-end (N(7)-methyl 5'-triphosphoguanosine)-(2'-O-methyl-ribonucleoside) in mRNA + S-adenosyl-L-homocysteine + H(+). Functionally, plays a role in virus budding by binding to the cell membrane and gathering the viral RNA into a nucleocapsid that forms the core of a mature virus particle. During virus entry, may induce genome penetration into the host cytoplasm after hemifusion induced by the surface proteins. Can migrate to the cell nucleus where it modulates host functions. Overcomes the anti-viral effects of host EXOC1 by sequestering and degrading the latter through the proteasome degradation pathway. Its function is as follows. Inhibits RNA silencing by interfering with host Dicer. Prevents premature fusion activity of envelope proteins in trans-Golgi by binding to envelope protein E at pH6.0. After virion release in extracellular space, gets dissociated from E dimers. In terms of biological role, acts as a chaperone for envelope protein E during intracellular virion assembly by masking and inactivating envelope protein E fusion peptide. prM is the only viral peptide matured by host furin in the trans-Golgi network probably to avoid catastrophic activation of the viral fusion activity in acidic Golgi compartment prior to virion release. prM-E cleavage is inefficient, and many virions are only partially matured. These uncleaved prM would play a role in immune evasion. Functionally, may play a role in virus budding. Exerts cytotoxic effects by activating a mitochondrial apoptotic pathway through M ectodomain. May display a viroporin activity. Its function is as follows. Binds to host cell surface receptor and mediates fusion between viral and cellular membranes. Envelope protein is synthesized in the endoplasmic reticulum in the form of heterodimer with protein prM. They play a role in virion budding in the ER, and the newly formed immature particle is covered with 60 spikes composed of heterodimer between precursor prM and envelope protein E. The virion is transported to the Golgi apparatus where the low pH causes dissociation of PrM-E heterodimers and formation of E homodimers. prM-E cleavage is inefficient, and many virions are only partially matured. These uncleaved prM would play a role in immune evasion. Involved in immune evasion, pathogenesis and viral replication. Once cleaved off the polyprotein, is targeted to three destinations: the viral replication cycle, the plasma membrane and the extracellular compartment. Essential for viral replication. Required for formation of the replication complex and recruitment of other non-structural proteins to the ER-derived membrane structures. Excreted as a hexameric lipoparticle that plays a role against host immune response. Antagonizing the complement function. Binds to the host macrophages and dendritic cells. Inhibits signal transduction originating from Toll-like receptor 3 (TLR3). In terms of biological role, component of the viral RNA replication complex that functions in virion assembly and antagonizes the host alpha/beta interferon antiviral response. Functionally, required cofactor for the serine protease function of NS3. May have membrane-destabilizing activity and form viroporins. Its function is as follows. Displays three enzymatic activities: serine protease, NTPase and RNA helicase. NS3 serine protease, in association with NS2B, performs its autocleavage and cleaves the polyprotein at dibasic sites in the cytoplasm: C-prM, NS2A-NS2B, NS2B-NS3, NS3-NS4A, NS4A-2K and NS4B-NS5. NS3 RNA helicase binds RNA and unwinds dsRNA in the 3' to 5' direction. Regulates the ATPase activity of the NS3 helicase activity. NS4A allows NS3 helicase to conserve energy during unwinding. In terms of biological role, functions as a signal peptide for NS4B and is required for the interferon antagonism activity of the latter. Functionally, induces the formation of ER-derived membrane vesicles where the viral replication takes place. Inhibits interferon (IFN)-induced host STAT1 phosphorylation and nuclear translocation, thereby preventing the establishment of cellular antiviral state by blocking the IFN-alpha/beta pathway. Inhibits STAT2 translocation in the nucleus after IFN-alpha treatment. Its function is as follows. Replicates the viral (+) and (-) RNA genome, and performs the capping of genomes in the cytoplasm. NS5 methylates viral RNA cap at guanine N-7 and ribose 2'-O positions. Besides its role in RNA genome replication, also prevents the establishment of cellular antiviral state by blocking the interferon-alpha/beta (IFN-alpha/beta) signaling pathway. Inhibits host TYK2 and STAT2 phosphorylation, thereby preventing activation of JAK-STAT signaling pathway. The polypeptide is Genome polyprotein (Culex annulirostris (Common banded mosquito)).